The following is a 164-amino-acid chain: Glutaredoxin-2, mitochondrial (164 aa).

The transit peptide at 1 to 19 (MIWRRAALAGTRLVWSRSG) directs the protein to the mitochondrion. At Ser-20 the chain carries Phosphoserine. One can recognise a Glutaredoxin domain in the interval 57–157 (VNQIQETISD…PLVHQCYLKK (101 aa)). Cys-68 contributes to the [2Fe-2S] cluster binding site. Lys-74 serves as a coordination point for glutathione. Cys-77 bears the S-glutathionyl cysteine; alternate mark. A disulfide bond links Cys-77 and Cys-80. Glutathione is bound by residues Gln-109 and Val-121. Cys-153 serves as a coordination point for [2Fe-2S] cluster.

It belongs to the glutaredoxin family. As to quaternary structure, monomer; active form. Homodimer; inactive form. The homodimer is probably linked by 1 2Fe-2S cluster. Widely expressed. Expressed in brain, heart, skeletal muscle, colon, thymus, spleen, kidney, liver, small intestine, placenta and lung. Not expressed in peripheral blood leukocytes.

The protein localises to the mitochondrion. Its subcellular location is the nucleus. With respect to regulation, the 2Fe-2S present in the homodimer leads to inactivation of the enzyme. The 2Fe-2S may serve as a redox sensor: the presence of one-electron oxidants or reductants leading to the loss of the 2Fe-2S cluster, subsequent monomerization and activation of the enzyme. Unlike other glutaredoxins, it is not inhibited by oxidation of structural Cys residues. Its function is as follows. Glutathione-dependent oxidoreductase that facilitates the maintenance of mitochondrial redox homeostasis upon induction of apoptosis by oxidative stress. Involved in response to hydrogen peroxide and regulation of apoptosis caused by oxidative stress. Acts as a very efficient catalyst of monothiol reactions because of its high affinity for protein glutathione-mixed disulfides. Can receive electrons not only from glutathione (GSH), but also from thioredoxin reductase supporting both monothiol and dithiol reactions. Efficiently catalyzes both glutathionylation and deglutathionylation of mitochondrial complex I, which in turn regulates the superoxide production by the complex. Overexpression decreases the susceptibility to apoptosis and prevents loss of cardiolipin and cytochrome c release. This Homo sapiens (Human) protein is Glutaredoxin-2, mitochondrial (GLRX2).